The following is a 426-amino-acid chain: 3-phosphoshikimate 1-carboxyvinyltransferase (426 aa).

Residues lysine 23, serine 24, and arginine 28 each coordinate 3-phosphoshikimate. Lysine 23 is a binding site for phosphoenolpyruvate. Phosphoenolpyruvate contacts are provided by glycine 96 and arginine 124. Threonine 170, serine 171, glutamine 172, serine 198, aspartate 314, and lysine 341 together coordinate 3-phosphoshikimate. Glutamine 172 is a phosphoenolpyruvate binding site. Residue aspartate 314 is the Proton acceptor of the active site. Phosphoenolpyruvate is bound by residues arginine 345, arginine 386, and lysine 411.

This sequence belongs to the EPSP synthase family. As to quaternary structure, monomer.

The protein resides in the cytoplasm. The enzyme catalyses 3-phosphoshikimate + phosphoenolpyruvate = 5-O-(1-carboxyvinyl)-3-phosphoshikimate + phosphate. The protein operates within metabolic intermediate biosynthesis; chorismate biosynthesis; chorismate from D-erythrose 4-phosphate and phosphoenolpyruvate: step 6/7. Catalyzes the transfer of the enolpyruvyl moiety of phosphoenolpyruvate (PEP) to the 5-hydroxyl of shikimate-3-phosphate (S3P) to produce enolpyruvyl shikimate-3-phosphate and inorganic phosphate. The sequence is that of 3-phosphoshikimate 1-carboxyvinyltransferase from Trichormus variabilis (strain ATCC 29413 / PCC 7937) (Anabaena variabilis).